The sequence spans 342 residues: D-erythrose-4-phosphate dehydrogenase (342 aa).

Residue 11–12 (RI) coordinates NAD(+). Residues 153-155 (SCT), Arg-199, 212-213 (TK), and Arg-235 each bind substrate. The active-site Nucleophile is Cys-154. Position 317 (Asn-317) interacts with NAD(+).

The protein belongs to the glyceraldehyde-3-phosphate dehydrogenase family. Epd subfamily. Homotetramer.

It localises to the cytoplasm. The enzyme catalyses D-erythrose 4-phosphate + NAD(+) + H2O = 4-phospho-D-erythronate + NADH + 2 H(+). It functions in the pathway cofactor biosynthesis; pyridoxine 5'-phosphate biosynthesis; pyridoxine 5'-phosphate from D-erythrose 4-phosphate: step 1/5. In terms of biological role, catalyzes the NAD-dependent conversion of D-erythrose 4-phosphate to 4-phosphoerythronate. The chain is D-erythrose-4-phosphate dehydrogenase from Shewanella denitrificans (strain OS217 / ATCC BAA-1090 / DSM 15013).